Reading from the N-terminus, the 361-residue chain is Queuine tRNA-ribosyltransferase (361 aa).

Asp92 serves as the catalytic Proton acceptor. Substrate is bound by residues 92-96, Asp146, Gln189, and Gly216; that span reads DSGGF. Positions 247-253 are RNA binding; sequence GVGKPAD. Asp266 functions as the Nucleophile in the catalytic mechanism. The tract at residues 271–275 is RNA binding; important for wobble base 34 recognition; sequence TRAGR. Residues Cys304, Cys306, Cys309, and His335 each contribute to the Zn(2+) site.

The protein belongs to the queuine tRNA-ribosyltransferase family. Homodimer. Within each dimer, one monomer is responsible for RNA recognition and catalysis, while the other monomer binds to the replacement base PreQ1. Zn(2+) is required as a cofactor.

It catalyses the reaction 7-aminomethyl-7-carbaguanine + guanosine(34) in tRNA = 7-aminomethyl-7-carbaguanosine(34) in tRNA + guanine. It participates in tRNA modification; tRNA-queuosine biosynthesis. Its function is as follows. Catalyzes the base-exchange of a guanine (G) residue with the queuine precursor 7-aminomethyl-7-deazaguanine (PreQ1) at position 34 (anticodon wobble position) in tRNAs with GU(N) anticodons (tRNA-Asp, -Asn, -His and -Tyr). Catalysis occurs through a double-displacement mechanism. The nucleophile active site attacks the C1' of nucleotide 34 to detach the guanine base from the RNA, forming a covalent enzyme-RNA intermediate. The proton acceptor active site deprotonates the incoming PreQ1, allowing a nucleophilic attack on the C1' of the ribose to form the product. After dissociation, two additional enzymatic reactions on the tRNA convert PreQ1 to queuine (Q), resulting in the hypermodified nucleoside queuosine (7-(((4,5-cis-dihydroxy-2-cyclopenten-1-yl)amino)methyl)-7-deazaguanosine). This Rickettsia massiliae (strain Mtu5) protein is Queuine tRNA-ribosyltransferase.